The sequence spans 319 residues: ATP-dependent 6-phosphofructokinase (319 aa).

G11 serves as a coordination point for ATP. Residues 21–25 and D59 contribute to the ADP site; that span reads RSVVR. ATP is bound by residues 72-73 and 102-105; these read RC and GDGS. D103 provides a ligand contact to Mg(2+). 125–127 provides a ligand contact to substrate; that stretch reads TID. The active-site Proton acceptor is D127. Residue R154 participates in ADP binding. Substrate contacts are provided by residues R162 and 169–171; that span reads MGR. Residues 185-187, R211, and 213-215 each bind ADP; these read GAE and KKH. Residues E222, R243, and 249–252 contribute to the substrate site; that span reads HVQR.

Belongs to the phosphofructokinase type A (PFKA) family. ATP-dependent PFK group I subfamily. Prokaryotic clade 'B1' sub-subfamily. Homotetramer. It depends on Mg(2+) as a cofactor.

The protein resides in the cytoplasm. It carries out the reaction beta-D-fructose 6-phosphate + ATP = beta-D-fructose 1,6-bisphosphate + ADP + H(+). Its pathway is carbohydrate degradation; glycolysis; D-glyceraldehyde 3-phosphate and glycerone phosphate from D-glucose: step 3/4. Allosterically activated by ADP and other diphosphonucleosides, and allosterically inhibited by phosphoenolpyruvate. Functionally, catalyzes the phosphorylation of D-fructose 6-phosphate to fructose 1,6-bisphosphate by ATP, the first committing step of glycolysis. This is ATP-dependent 6-phosphofructokinase from Geobacillus stearothermophilus (Bacillus stearothermophilus).